The sequence spans 100 residues: Tuberoinfundibular peptide of 39 residues (100 aa).

Residues 1 to 30 (METRQVSRSPRVRLLLLLLLLLVVPWGVRT) form the signal peptide. A propeptide spanning residues 31 to 59 (ASGVALPPVGVLSLRPPGRAWADPATPRP) is cleaved from the precursor.

Belongs to the parathyroid hormone family. Ligand of high affinity for the PTH2 receptor (PTH2R).

It localises to the secreted. In terms of biological role, plays a role as a potent and selective agonist of PTH2R resulting in adenyl cyclase activation and intracellular calcium levels elevation. Induces protein kinase C beta activation, recruitment of beta-arrestin and PTH2R internalization. May inhibit cell proliferation via its action of PTH2R activation. Neuropeptide which may also have a role in spermatogenesis. May activate nociceptors and nociceptive circuits. In Bos taurus (Bovine), this protein is Tuberoinfundibular peptide of 39 residues (PTH2).